An 88-amino-acid chain; its full sequence is Small ribosomal subunit protein uS15 (88 aa).

Belongs to the universal ribosomal protein uS15 family. As to quaternary structure, part of the 30S ribosomal subunit. Forms a bridge to the 50S subunit in the 70S ribosome, contacting the 23S rRNA.

Functionally, one of the primary rRNA binding proteins, it binds directly to 16S rRNA where it helps nucleate assembly of the platform of the 30S subunit by binding and bridging several RNA helices of the 16S rRNA. In terms of biological role, forms an intersubunit bridge (bridge B4) with the 23S rRNA of the 50S subunit in the ribosome. This is Small ribosomal subunit protein uS15 from Polaromonas naphthalenivorans (strain CJ2).